Here is a 269-residue protein sequence, read N- to C-terminus: Formamidopyrimidine-DNA glycosylase (269 aa).

P2 serves as the catalytic Schiff-base intermediate with DNA. E3 functions as the Proton donor in the catalytic mechanism. K57 (proton donor; for beta-elimination activity) is an active-site residue. H90, R109, and K150 together coordinate DNA. The FPG-type zinc finger occupies 235-269 (QVYGRKGEPCRVCGTPIVATKHAQRATFYCRQCQK). R259 (proton donor; for delta-elimination activity) is an active-site residue.

The protein belongs to the FPG family. Monomer. Zn(2+) is required as a cofactor.

The enzyme catalyses Hydrolysis of DNA containing ring-opened 7-methylguanine residues, releasing 2,6-diamino-4-hydroxy-5-(N-methyl)formamidopyrimidine.. It carries out the reaction 2'-deoxyribonucleotide-(2'-deoxyribose 5'-phosphate)-2'-deoxyribonucleotide-DNA = a 3'-end 2'-deoxyribonucleotide-(2,3-dehydro-2,3-deoxyribose 5'-phosphate)-DNA + a 5'-end 5'-phospho-2'-deoxyribonucleoside-DNA + H(+). Involved in base excision repair of DNA damaged by oxidation or by mutagenic agents. Acts as a DNA glycosylase that recognizes and removes damaged bases. Has a preference for oxidized purines, such as 7,8-dihydro-8-oxoguanine (8-oxoG). Has AP (apurinic/apyrimidinic) lyase activity and introduces nicks in the DNA strand. Cleaves the DNA backbone by beta-delta elimination to generate a single-strand break at the site of the removed base with both 3'- and 5'-phosphates. This chain is Formamidopyrimidine-DNA glycosylase, found in Escherichia coli (strain 55989 / EAEC).